Reading from the N-terminus, the 115-residue chain is Phosphoribosyl-AMP cyclohydrolase (115 aa).

Aspartate 80 provides a ligand contact to Mg(2+). Cysteine 81 serves as a coordination point for Zn(2+). Positions 82 and 84 each coordinate Mg(2+). Zn(2+)-binding residues include cysteine 97 and cysteine 104.

Belongs to the PRA-CH family. As to quaternary structure, homodimer. Mg(2+) is required as a cofactor. It depends on Zn(2+) as a cofactor.

The protein resides in the cytoplasm. The catalysed reaction is 1-(5-phospho-beta-D-ribosyl)-5'-AMP + H2O = 1-(5-phospho-beta-D-ribosyl)-5-[(5-phospho-beta-D-ribosylamino)methylideneamino]imidazole-4-carboxamide. It participates in amino-acid biosynthesis; L-histidine biosynthesis; L-histidine from 5-phospho-alpha-D-ribose 1-diphosphate: step 3/9. In terms of biological role, catalyzes the hydrolysis of the adenine ring of phosphoribosyl-AMP. The polypeptide is Phosphoribosyl-AMP cyclohydrolase (Mycobacterium sp. (strain MCS)).